Consider the following 766-residue polypeptide: Single-minded homolog 1 (766 aa).

A bHLH domain is found at 1-53; that stretch reads MKEKSKNAARTRREKENSEFYELAKLLPLPSAITSQLDKASIIRLTTSYLKMR. PAS domains follow at residues 77-147 and 218-288; these read GREL…QPYH and PPSA…LVKG. The 44-residue stretch at 292-335 folds into the PAC domain; sequence TKYYRFLAKHGGWVWVQSYATIVHNSRSSRPHCIVSVNYVLTDT. The region spanning 336 to 766 is the Single-minded C-terminal domain; that stretch reads EYKGLQLSLD…GTSVIITNGS (431 aa). The span at 353–365 shows a compositional bias: polar residues; it reads AFSYTSSSTPTMT. Disordered stretches follow at residues 353–431 and 528–563; these read AFSY…SQHD and WDEDSVVSSPDPGSASESGDRYRTEQYQSSPHEPSK. The Nuclear localization signal signature appears at 368–387; sequence RKGAKSRLSSSKSKSRTSPY. The segment covering 373–385 has biased composition (low complexity); the sequence is SRLSSSKSKSRTS. Residues 394–404 show a composition bias toward basic and acidic residues; it reads HTERSESDHDS.

Efficient DNA binding requires dimerization with another bHLH protein. Heterodimer; forms a heterodimer with ARNT, ARNT2.

Its subcellular location is the nucleus. Functionally, transcriptional factor that may have pleiotropic effects during embryogenesis and in the adult. The sequence is that of Single-minded homolog 1 (SIM1) from Pan paniscus (Pygmy chimpanzee).